The primary structure comprises 229 residues: Cytochrome b6-f complex iron-sulfur subunit, chloroplastic (229 aa).

Residues 1-50 (MASSSLSPATQLGSSRSALMAMSSGLFVKPTKMNHQMVRKEKIGLRISCQ) constitute a chloroplast transit peptide. Residues 68 to 90 (LNLLLLGALSLPTGYMLVPYATF) form a helical membrane-spanning segment. The Rieske domain maps to 115-211 (AAEWLKTHGP…ADIDEAGKVL (97 aa)). C157, H159, C175, and H178 together coordinate [2Fe-2S] cluster. A disulfide bridge connects residues C162 and C177. Residue S196 is modified to Phosphoserine.

The protein belongs to the Rieske iron-sulfur protein family. In terms of assembly, the 4 large subunits of the cytochrome b6-f complex are cytochrome b6, subunit IV (17 kDa polypeptide, petD), cytochrome f and the Rieske protein, while the 4 small subunits are petG, petL, petM and petN. The complex functions as a dimer. Interacts with PGRL1A. Component of a mitochondrial large protein complex that contains, at least, MIC60, DGS1, TOM40, TOM20 proteins, and petC/RISP. The cofactor is [2Fe-2S] cluster. As to expression, confined to photosynthetic tissues, with highest levels in flowers. In leaves, mostly localized in mesophyll cells. In stems, confined to the peripheral ring of chlorenchyma and adjoining groups of cells associated with the vascular bundles. In siliques, present in green wall of the fruit and in peduncle but not in the translucide white septum of the seeds.

It localises to the plastid. Its subcellular location is the chloroplast thylakoid membrane. The protein localises to the mitochondrion inner membrane. The enzyme catalyses 2 oxidized [plastocyanin] + a plastoquinol + 2 H(+)(in) = 2 reduced [plastocyanin] + a plastoquinone + 4 H(+)(out). Functionally, essential protein for photoautotrophism. Confers resistance to photo-oxidative damages by contributing to the thermal dissipation of light energy and to lumenal acidification (increase of pH gradient). Component of the cytochrome b6-f complex, which mediates electron transfer between photosystem II (PSII) and photosystem I (PSI), cyclic electron flow around PSI, and state transitions. The chain is Cytochrome b6-f complex iron-sulfur subunit, chloroplastic from Arabidopsis thaliana (Mouse-ear cress).